The chain runs to 569 residues: Urease subunit beta (569 aa).

Residues 131-569 (GGIDTHIHFI…VSLAQLFSIF (439 aa)) enclose the Urease domain. Ni(2+) is bound by residues His-136, His-138, and Lys-219. An N6-carboxylysine modification is found at Lys-219. His-221 serves as a coordination point for substrate. Residues His-248 and His-274 each contribute to the Ni(2+) site. Residue His-322 is the Proton donor of the active site. Asp-362 is a Ni(2+) binding site.

Belongs to the metallo-dependent hydrolases superfamily. Urease alpha subunit family. As to quaternary structure, heterohexamer of 3 UreA (alpha) and 3 UreB (beta) subunits. It depends on Ni cation as a cofactor. Post-translationally, carboxylation allows a single lysine to coordinate two nickel ions.

It is found in the cytoplasm. It carries out the reaction urea + 2 H2O + H(+) = hydrogencarbonate + 2 NH4(+). It participates in nitrogen metabolism; urea degradation; CO(2) and NH(3) from urea (urease route): step 1/1. The polypeptide is Urease subunit beta (Helicobacter pylori (strain Shi470)).